The primary structure comprises 306 residues: Ribonuclease Z (306 aa).

Residues His63, His65, Asp67, His68, His141, Asp211, and His269 each contribute to the Zn(2+) site. Asp67 acts as the Proton acceptor in catalysis.

The protein belongs to the RNase Z family. As to quaternary structure, homodimer. Requires Zn(2+) as cofactor.

It catalyses the reaction Endonucleolytic cleavage of RNA, removing extra 3' nucleotides from tRNA precursor, generating 3' termini of tRNAs. A 3'-hydroxy group is left at the tRNA terminus and a 5'-phosphoryl group is left at the trailer molecule.. Zinc phosphodiesterase, which displays some tRNA 3'-processing endonuclease activity. Probably involved in tRNA maturation, by removing a 3'-trailer from precursor tRNA. In Staphylococcus carnosus (strain TM300), this protein is Ribonuclease Z.